A 451-amino-acid polypeptide reads, in one-letter code: Chromosomal replication initiator protein DnaA (451 aa).

Residues 1–72 (MQSIEDIWQE…ANILQEITGR (72 aa)) form a domain I, interacts with DnaA modulators region. The segment at 72-108 (RLFDVRFIDGEQEENFEYTVIKPNPALDEDGVEIGKH) is domain II. The tract at residues 109–325 (MLNPRYVFDT…GALIRVVAYS (217 aa)) is domain III, AAA+ region. Residues Gly-153, Gly-155, Lys-156, and Thr-157 each coordinate ATP. A domain IV, binds dsDNA region spans residues 326–451 (SLVNKDITAG…KNLRKAQNMF (126 aa)).

The protein belongs to the DnaA family. In terms of assembly, oligomerizes as a right-handed, spiral filament on DNA at oriC.

It is found in the cytoplasm. Functionally, plays an essential role in the initiation and regulation of chromosomal replication. ATP-DnaA binds to the origin of replication (oriC) to initiate formation of the DNA replication initiation complex once per cell cycle. Binds the DnaA box (a 9 base pair repeat at the origin) and separates the double-stranded (ds)DNA. Forms a right-handed helical filament on oriC DNA; dsDNA binds to the exterior of the filament while single-stranded (ss)DNA is stabiized in the filament's interior. The ATP-DnaA-oriC complex binds and stabilizes one strand of the AT-rich DNA unwinding element (DUE), permitting loading of DNA polymerase. After initiation quickly degrades to an ADP-DnaA complex that is not apt for DNA replication. Binds acidic phospholipids. The protein is Chromosomal replication initiator protein DnaA of Listeria monocytogenes serotype 4b (strain CLIP80459).